The following is a 212-amino-acid chain: Pyrrolidone-carboxylate peptidase (212 aa).

Catalysis depends on residues Glu-78, Cys-141, and His-165.

The protein belongs to the peptidase C15 family. Homotetramer.

It localises to the cytoplasm. The enzyme catalyses Release of an N-terminal pyroglutamyl group from a polypeptide, the second amino acid generally not being Pro.. Removes 5-oxoproline from various penultimate amino acid residues except L-proline. In Staphylococcus aureus, this protein is Pyrrolidone-carboxylate peptidase (pcp).